We begin with the raw amino-acid sequence, 1169 residues long: MEIQFLAGRSGSGKTTAILEEIKEQLRLDPLGPPIIFLVPDQMTFLMEYELAKTSEAGGMIRAKVFSFTRLAWSILQQTGGANRQFVTSTGIQMLLRKVIEEQKDKFKVFKKASDKPGFVEQIEKTMAEFKRYCMLPEEIEKISVESMLSEYTEERRAAEKLHDLHVLYQQMEEHLQDEYVHSEDYLNLLAQQIPSAEEIKGAHIYIDGFYQFTPQQLLVIEQLLLHAAKVTAAFTVDQSYHDRQPNELDLFRMTGKTYFQLYQLAKECGADISETIFERNHRHLYTPDLAYLEHQYEQRPVQPYQENTPHLTVSKSASKRAEIEGVARDILDLVREKGLRLRDISVVARHVDDYKDTLKEVFRDYDIPFFIDGNESMQYHPLIELIRSSLDVIKGNWRYEAVFRCVKTEFLFPLEITKNKAREQADQLENYCIAYGVKGERWTNGSRFHYRRFQSLDEDFRQTDQEIEMEQMLNDVKEWITPPLYQLQKRLKNAQKVRDMVEAVYVFLEEIQVPDKLEKARLEAEEAGRLAEAMQHGQVWDAVIQLMDEFVDMLGDEELSFPLFQQMIDTGLASLKFALIPPSLDQVFIGSMDLSRMYQVKCMFIIGVNDGVIPARPSDESVLSEDDREWLKRAGAELAETGKERLLDEQFLIYQALSSPSHHLYLSYAASDAEGRSLLPSPLIKYCQELMPNHQQALYVLDPELLEDDEQLKFVANEHVSLSYTISQLQQWLNQYPISGVWWSVYNYLMTSPNRDVSKNIMSSLFFTNRAKPLKPNVTKELYGDHIQGSVSRMEKFNACAFSHFASHGLKLKDRQFYKLEAPDIGQLFHSALKHISDTLVEQKKDWKNLTKEDCVTYSRHAIEQLAPRLQKEILLSSNRHAYIKEKLQKILIRVSSILSEHAKVSGFSPVGLELGFGGQGPLPPFTFQLKNGCTMELVGRIDRVDKAEGSKGLFLRIVDYKSSEKGLDLAEVYYGLALQMLTYLDLTITYSKEWLGIEATPAGILYFHIHDPFIQAPIPLAEDEIEQEIFKKFKMKGLLLEDVEAVKLMDQTLESGRSQVIQAGLKKDGSFRSDSAVLSEDHFHILTQHVRRTFEEAGERITNGEVAINPYKLKDQTPCRFCSFKSICQFDESIEDNDFRVLTSEKDDVVIERIKKEGDQYANTKTE.

Residues 1–285 (MEIQFLAGRS…TIFERNHRHL (285 aa)) form the UvrD-like helicase ATP-binding domain. 8–15 (GRSGSGKT) contributes to the ATP binding site. Positions 280 to 586 (RNHRHLYTPD…KFALIPPSLD (307 aa)) constitute a UvrD-like helicase C-terminal domain. [4Fe-4S] cluster is bound by residues cysteine 801, cysteine 1121, cysteine 1124, and cysteine 1130.

This sequence belongs to the helicase family. AddB/RexB type 1 subfamily. In terms of assembly, heterodimer of AddA and AddB. It depends on Mg(2+) as a cofactor. [4Fe-4S] cluster serves as cofactor.

In terms of biological role, the heterodimer acts as both an ATP-dependent DNA helicase and an ATP-dependent, dual-direction single-stranded exonuclease. Recognizes the chi site generating a DNA molecule suitable for the initiation of homologous recombination. The AddB subunit has 5' -&gt; 3' nuclease activity but not helicase activity. The polypeptide is ATP-dependent helicase/deoxyribonuclease subunit B (Bacillus pumilus (strain SAFR-032)).